Here is a 1107-residue protein sequence, read N- to C-terminus: Membrane-associated guanylate kinase, WW and PDZ domain-containing protein 3 (1107 aa).

The PDZ 1 domain maps to 17–102 (ECGLSGVGGD…PIRLKTVKPG (86 aa)). Residues 110–284 (RHYLSLQFQK…SMDFRNYLTR (175 aa)) enclose the Guanylate kinase-like domain. 117–124 (FQKGSIDH) serves as a coordination point for ATP. The tract at residues 210–277 (FDTETQRKRT…SYNQTNSSMD (68 aa)) is disordered. Residues 220–231 (TSVSKMQRTDSS) show a composition bias toward polar residues. Acidic residues predominate over residues 232-241 (LPEEEDEEER). The segment covering 251–261 (TDHRDRQEPSE) has biased composition (basic and acidic residues). Residues 267 to 277 (PSYNQTNSSMD) are compositionally biased toward polar residues. WW domains are found at residues 289 to 322 (EPLP…DPRL) and 335 to 368 (GELP…NPVL). The tract at residues 374-398 (KQLNPAPSEGTVHQEPENSQFTRDP) is disordered. 4 consecutive PDZ domains span residues 407-489 (HTSL…TLCR), 577-653 (TIPL…LILR), 727-809 (DVFL…TVRR), and 853-940 (DVIL…IAEE). The segment at 941 to 975 (EHRGPPSGSNSARQSPAPQHRPMGQTQPTYGTLDR) is disordered. Polar residues predominate over residues 947-957 (SGSNSARQSPA). Positions 1003-1085 (PVELERGPRG…KVLLLLRPGT (83 aa)) constitute a PDZ 6 domain.

Belongs to the MAGUK family.

It localises to the cell membrane. It is found in the cell junction. The protein resides in the tight junction. In terms of biological role, acts as a scaffolding protein at cell-cell junctions, thereby regulating various cellular and signaling processes. In Xenopus tropicalis (Western clawed frog), this protein is Membrane-associated guanylate kinase, WW and PDZ domain-containing protein 3 (magi3).